An 87-amino-acid polypeptide reads, in one-letter code: Small ribosomal subunit protein bS20 (87 aa).

Positions M1 to A22 are enriched in basic residues. The tract at residues M1–M27 is disordered.

It belongs to the bacterial ribosomal protein bS20 family.

Functionally, binds directly to 16S ribosomal RNA. The sequence is that of Small ribosomal subunit protein bS20 from Pectobacterium atrosepticum (strain SCRI 1043 / ATCC BAA-672) (Erwinia carotovora subsp. atroseptica).